The chain runs to 295 residues: Light-independent protochlorophyllide reductase iron-sulfur ATP-binding protein (295 aa).

Residues 39-44 (GIGKST) and lysine 68 each bind ATP. Serine 43 contributes to the Mg(2+) binding site. Residues cysteine 124 and cysteine 158 each coordinate [4Fe-4S] cluster. 209-210 (NR) is a binding site for ATP.

It belongs to the NifH/BchL/ChlL family. As to quaternary structure, homodimer. Protochlorophyllide reductase is composed of three subunits; ChlL, ChlN and ChlB. It depends on [4Fe-4S] cluster as a cofactor.

The enzyme catalyses chlorophyllide a + oxidized 2[4Fe-4S]-[ferredoxin] + 2 ADP + 2 phosphate = protochlorophyllide a + reduced 2[4Fe-4S]-[ferredoxin] + 2 ATP + 2 H2O. It participates in porphyrin-containing compound metabolism; chlorophyll biosynthesis (light-independent). Its function is as follows. Component of the dark-operative protochlorophyllide reductase (DPOR) that uses Mg-ATP and reduced ferredoxin to reduce ring D of protochlorophyllide (Pchlide) to form chlorophyllide a (Chlide). This reaction is light-independent. The L component serves as a unique electron donor to the NB-component of the complex, and binds Mg-ATP. This Prochlorococcus marinus (strain MIT 9312) protein is Light-independent protochlorophyllide reductase iron-sulfur ATP-binding protein.